Reading from the N-terminus, the 294-residue chain is Ribosomal RNA small subunit methyltransferase A (294 aa).

Residues Asn31, Leu33, Gly58, Glu79, Asp104, and Asn129 each coordinate S-adenosyl-L-methionine.

Belongs to the class I-like SAM-binding methyltransferase superfamily. rRNA adenine N(6)-methyltransferase family. RsmA subfamily.

It localises to the cytoplasm. The catalysed reaction is adenosine(1518)/adenosine(1519) in 16S rRNA + 4 S-adenosyl-L-methionine = N(6)-dimethyladenosine(1518)/N(6)-dimethyladenosine(1519) in 16S rRNA + 4 S-adenosyl-L-homocysteine + 4 H(+). Specifically dimethylates two adjacent adenosines (A1518 and A1519) in the loop of a conserved hairpin near the 3'-end of 16S rRNA in the 30S particle. May play a critical role in biogenesis of 30S subunits. In Oceanobacillus iheyensis (strain DSM 14371 / CIP 107618 / JCM 11309 / KCTC 3954 / HTE831), this protein is Ribosomal RNA small subunit methyltransferase A.